A 210-amino-acid chain; its full sequence is Large ribosomal subunit protein uL4 (210 aa).

Positions 57-78 (VSGGGAKPWKQKGTGRARAGSN) are disordered.

This sequence belongs to the universal ribosomal protein uL4 family. As to quaternary structure, part of the 50S ribosomal subunit.

Functionally, one of the primary rRNA binding proteins, this protein initially binds near the 5'-end of the 23S rRNA. It is important during the early stages of 50S assembly. It makes multiple contacts with different domains of the 23S rRNA in the assembled 50S subunit and ribosome. Its function is as follows. Forms part of the polypeptide exit tunnel. The protein is Large ribosomal subunit protein uL4 of Desulfovibrio desulfuricans (strain ATCC 27774 / DSM 6949 / MB).